Consider the following 328-residue polypeptide: Gonadotropin-releasing hormone receptor (328 aa).

Over 1–38 (MQDDTSSEQNPTHCSAINSSVPLVQGALPTLTLSGKIR) the chain is Extracellular. An N-linked (GlcNAc...) asparagine glycan is attached at asparagine 18. Residues 39 to 59 (VTVTFFLFLVSTTLNASFLLK) traverse the membrane as a helical segment. Topologically, residues 60-84 (LQKWTQKKEKGKKLSRMKVLLKHLT) are cytoplasmic. A helical membrane pass occupies residues 85–105 (LANLLETLIVMPLDGMWNITV). The Extracellular portion of the chain corresponds to 106 to 115 (QWYAGELLCK). A disulfide bond links cysteine 114 and cysteine 196. Residues 116–136 (ILSYLKLFSMYAPAFMMVVIS) form a helical membrane-spanning segment. The Cytoplasmic segment spans residues 137–160 (LDRSMAITRPLPVQSNRKLEQSMT). Residues 161–181 (GLAWGLSSVLAGPQLYIFKMI) form a helical membrane-spanning segment. The Extracellular segment spans residues 182 to 208 (HLENGPGQTEVFSQCVTHCSFPQWWHQ). Residues 209–229 (AFYNFFTFICLFIIPLLIMLI) form a helical membrane-spanning segment. Topologically, residues 230–271 (CNAKIIFTLTQVLQQDSNKLQLNQSKNNIPRARLRTLKMTVA) are cytoplasmic. The chain crosses the membrane as a helical span at residues 272-292 (FAASFIVCWTPYYVLGLWYWF). The Extracellular segment spans residues 293 to 306 (DPGMLHRMSEPVNH). A helical membrane pass occupies residues 307–327 (FFFLFAFLNPCFDPLIYGYFS). A topological domain (cytoplasmic) is located at residue leucine 328.

Belongs to the G-protein coupled receptor 1 family.

It is found in the cell membrane. Receptor for gonadotropin releasing hormone (GnRH) that mediates the action of GnRH to stimulate the secretion of the gonadotropic hormones luteinizing hormone (LH) and follicle-stimulating hormone (FSH). This receptor mediates its action by association with G-proteins that activate a phosphatidylinositol-calcium second messenger system. This chain is Gonadotropin-releasing hormone receptor (GNRHR), found in Cavia porcellus (Guinea pig).